The sequence spans 318 residues: HPr kinase/phosphorylase (318 aa).

Active-site residues include histidine 141 and lysine 162. 156 to 163 serves as a coordination point for ATP; the sequence is GDSAMGKS. Residue serine 163 participates in Mg(2+) binding. The Proton acceptor; for phosphorylation activity. Proton donor; for dephosphorylation activity role is filled by aspartate 180. The important for the catalytic mechanism of both phosphorylation and dephosphorylation stretch occupies residues 204–213; that stretch reads LEVRGLGILN. Position 205 (glutamate 205) interacts with Mg(2+). Arginine 248 is a catalytic residue. Residues 269–274 form an important for the catalytic mechanism of dephosphorylation region; the sequence is PVAAGR.

The protein belongs to the HPrK/P family. In terms of assembly, homohexamer. It depends on Mg(2+) as a cofactor.

It carries out the reaction [HPr protein]-L-serine + ATP = [HPr protein]-O-phospho-L-serine + ADP + H(+). The catalysed reaction is [HPr protein]-O-phospho-L-serine + phosphate + H(+) = [HPr protein]-L-serine + diphosphate. Its function is as follows. Catalyzes the ATP- as well as the pyrophosphate-dependent phosphorylation of a specific serine residue in HPr, a phosphocarrier protein of the phosphoenolpyruvate-dependent sugar phosphotransferase system (PTS). HprK/P also catalyzes the pyrophosphate-producing, inorganic phosphate-dependent dephosphorylation (phosphorolysis) of seryl-phosphorylated HPr (P-Ser-HPr). This is HPr kinase/phosphorylase from Chromobacterium violaceum (strain ATCC 12472 / DSM 30191 / JCM 1249 / CCUG 213 / NBRC 12614 / NCIMB 9131 / NCTC 9757 / MK).